We begin with the raw amino-acid sequence, 731 residues long: E3 ubiquitin-protein ligase COP1 (731 aa).

Positions 1-40 (MSGSRQAGSGSAGTSPGSSAASSVTSASSSLSSSPSPPSV) are disordered. The Nuclear localization signal 1 motif lies at 109-113 (GSRKR). An RING-type zinc finger spans residues 136–174 (CPICFDMIEEAYMTKCGHSFCYKCIHQSLEDNNRCPKCN). A Nuclear localization signal 2 motif is present at residues 195–206 (KQKQRFEEKRFK). A coiled-coil region spans residues 233–301 (LDLANVNLML…DIKRVEEMSG (69 aa)). The Nuclear export signal motif lies at 235–245 (LANVNLMLELL). The interval 305 to 325 (PVSEDSTVPQFEAPSPSHSSI) is disordered. WD repeat units follow at residues 419 to 458 (NGSS…QDAV), 468 to 508 (TCNS…RSKV), 511 to 551 (EHEK…SVAS), 553 to 593 (EAKA…QPIM), 597 to 635 (GHRK…CLRS), 638 to 677 (GHIN…TLLT), and 691 to 729 (RKED…KVLE). The interaction with TRIB1 stretch occupies residues 643–645 (KNF).

This sequence belongs to the COP1 family. In terms of assembly, homodimer. Homodimerization is mediated by the coiled coil domain. Component of the DCX DET1-COP1 ubiquitin ligase complex at least composed of RBX1, DET1, DDB1, CUL4A and COP1. Isoform 2 does not interact with CUL4A but still binds to RBX1, suggesting that the interaction may be mediated by another cullin protein. Isoform 1 and isoform 2 interact with CUL5 but not with CUL1, CUL2 not CUL3. Interacts with bZIP transcription factors JUN, JUNB and JUND but not with FOS, ATF2 nor XBP1. Interacts with p53 (TP53). Interacts with COPS6; this interaction stabilizes RFWD2 through reducing its auto-ubiquitination and decelerating its turnover rate. Interacts with SFN; this interaction leads to SFN degradation. Isoform 4 forms heterodimers with isoform 1, preventing its association with DET1. Interacts with p53/TP53 and MTA1. Interacts with TRIB1 (via C-terminus) and TRIB2. In terms of processing, autoubiquitinated. MTA1 destabilizes it by promoting its autoubiquitination. As to expression, ubiquitously expressed at low level. Expressed at higher level in testis, placenta, skeletal muscle and heart.

It is found in the nucleus speckle. The protein resides in the cytoplasm. It carries out the reaction S-ubiquitinyl-[E2 ubiquitin-conjugating enzyme]-L-cysteine + [acceptor protein]-L-lysine = [E2 ubiquitin-conjugating enzyme]-L-cysteine + N(6)-ubiquitinyl-[acceptor protein]-L-lysine.. It participates in protein modification; protein ubiquitination. Its activity is regulated as follows. TRIB1 competes with substrates for RFWD2 binding. In terms of biological role, E3 ubiquitin-protein ligase that mediates ubiquitination and subsequent proteasomal degradation of target proteins. E3 ubiquitin ligases accept ubiquitin from an E2 ubiquitin-conjugating enzyme in the form of a thioester and then directly transfers the ubiquitin to targeted substrates. Involved in JUN ubiquitination and degradation. Directly involved in p53 (TP53) ubiquitination and degradation, thereby abolishing p53-dependent transcription and apoptosis. Ubiquitinates p53 independently of MDM2 or RCHY1. Probably mediates E3 ubiquitin ligase activity by functioning as the essential RING domain subunit of larger E3 complexes. In contrast, it does not constitute the catalytic RING subunit in the DCX DET1-COP1 complex that negatively regulates JUN, the ubiquitin ligase activity being mediated by RBX1. Involved in 14-3-3 protein sigma/SFN ubiquitination and proteasomal degradation, leading to AKT activation and promotion of cell survival. Ubiquitinates MTA1 leading to its proteasomal degradation. Upon binding to TRIB1, ubiquitinates CEBPA, which lacks a canonical COP1-binding motif. This is E3 ubiquitin-protein ligase COP1 from Homo sapiens (Human).